An 824-amino-acid chain; its full sequence is Leucine--tRNA ligase (824 aa).

Positions 42 to 52 (PYPSGRIHMGH) match the 'HIGH' region motif. The short motif at 581-585 (KMSKS) is the 'KMSKS' region element. Lys-584 is an ATP binding site.

The protein belongs to the class-I aminoacyl-tRNA synthetase family.

The protein localises to the cytoplasm. It catalyses the reaction tRNA(Leu) + L-leucine + ATP = L-leucyl-tRNA(Leu) + AMP + diphosphate. This Geobacter sulfurreducens (strain ATCC 51573 / DSM 12127 / PCA) protein is Leucine--tRNA ligase.